Here is a 51-residue protein sequence, read N- to C-terminus: uncharacterized protein (51 aa).

The chain crosses the membrane as a helical span at residues 20 to 42 (NFFSRMWNAVVFGFGAAIGASVA).

The protein localises to the membrane. This is an uncharacterized protein from Schizosaccharomyces pombe (strain 972 / ATCC 24843) (Fission yeast).